The sequence spans 161 residues: S-ribosylhomocysteine lyase (161 aa).

Residues His-57, His-61, and Cys-127 each coordinate Fe cation.

This sequence belongs to the LuxS family. As to quaternary structure, homodimer. Fe cation serves as cofactor.

It carries out the reaction S-(5-deoxy-D-ribos-5-yl)-L-homocysteine = (S)-4,5-dihydroxypentane-2,3-dione + L-homocysteine. Functionally, involved in the synthesis of autoinducer 2 (AI-2) which is secreted by bacteria and is used to communicate both the cell density and the metabolic potential of the environment. The regulation of gene expression in response to changes in cell density is called quorum sensing. Catalyzes the transformation of S-ribosylhomocysteine (RHC) to homocysteine (HC) and 4,5-dihydroxy-2,3-pentadione (DPD). The protein is S-ribosylhomocysteine lyase of Streptococcus equi subsp. equi (strain 4047).